Reading from the N-terminus, the 93-residue chain is Small ribosomal subunit protein uS19 (93 aa).

The protein belongs to the universal ribosomal protein uS19 family.

Protein S19 forms a complex with S13 that binds strongly to the 16S ribosomal RNA. This is Small ribosomal subunit protein uS19 from Leptospira borgpetersenii serovar Hardjo-bovis (strain JB197).